The sequence spans 765 residues: Probable dehydratase PflD (765 aa).

A PFL domain is found at 3–637; the sequence is NRISRLKTAL…VVGATPDGRF (635 aa). The Glycine radical domain occupies 645-765; that stretch reads GGLSPMLGQD…DIIRRTAHQL (121 aa). Glycine 741 is subject to Glycine radical.

The protein belongs to the glycyl radical enzyme (GRE) family.

Probably shows dehydratase activity. This is Probable dehydratase PflD (pflD) from Escherichia coli (strain K12).